The primary structure comprises 133 residues: Large ribosomal subunit protein bL12 (133 aa).

It belongs to the bacterial ribosomal protein bL12 family. In terms of assembly, homodimer. Part of the ribosomal stalk of the 50S ribosomal subunit. Forms a multimeric L10(L12)X complex, where L10 forms an elongated spine to which 2 to 4 L12 dimers bind in a sequential fashion. Binds GTP-bound translation factors.

Its function is as follows. Forms part of the ribosomal stalk which helps the ribosome interact with GTP-bound translation factors. Is thus essential for accurate translation. This chain is Large ribosomal subunit protein bL12, found in Trichodesmium erythraeum (strain IMS101).